Reading from the N-terminus, the 384-residue chain is S-adenosylmethionine synthase (384 aa).

His15 serves as a coordination point for ATP. Asp17 is a binding site for Mg(2+). Residue Glu43 coordinates K(+). 2 residues coordinate L-methionine: Glu56 and Gln99. Residues 99–109 (QSPDINQGVDR) form a flexible loop region. ATP is bound by residues 164-166 (DAK), 230-231 (RF), Asp239, 245-246 (RK), Ala262, and Lys266. Residue Asp239 participates in L-methionine binding. Residue Lys270 participates in L-methionine binding.

This sequence belongs to the AdoMet synthase family. In terms of assembly, homotetramer; dimer of dimers. Requires Mg(2+) as cofactor. K(+) is required as a cofactor.

It is found in the cytoplasm. It carries out the reaction L-methionine + ATP + H2O = S-adenosyl-L-methionine + phosphate + diphosphate. The protein operates within amino-acid biosynthesis; S-adenosyl-L-methionine biosynthesis; S-adenosyl-L-methionine from L-methionine: step 1/1. Functionally, catalyzes the formation of S-adenosylmethionine (AdoMet) from methionine and ATP. The overall synthetic reaction is composed of two sequential steps, AdoMet formation and the subsequent tripolyphosphate hydrolysis which occurs prior to release of AdoMet from the enzyme. The polypeptide is S-adenosylmethionine synthase (Salmonella arizonae (strain ATCC BAA-731 / CDC346-86 / RSK2980)).